A 33-amino-acid chain; its full sequence is Brevinin 2AV (33 aa).

A disulfide bond links cysteine 27 and cysteine 33.

In terms of tissue distribution, expressed by the skin glands.

The protein localises to the secreted. Functionally, has antibacterial activity. The polypeptide is Brevinin 2AV (Rana arvalis (Moor frog)).